The primary structure comprises 259 residues: Probable ABC transporter arginine-binding protein ArtJ (259 aa).

The first 25 residues, 1–25 (MIKQIGRFFRAFIFIMPLSLTSCES), serve as a signal peptide directing secretion. Residues N38, E45, A96, G97, S99, R104, and F149 each contribute to the L-arginine site.

The protein belongs to the bacterial solute-binding protein 3 family.

It is found in the secreted. The protein localises to the cell surface. In terms of biological role, probably part of an ABC transporter complex involved in arginine transport. Binds arginine. Interacts with host epithelial cells, suggesting a role in host-cell adhesion during infection. In Chlamydia pneumoniae (Chlamydophila pneumoniae), this protein is Probable ABC transporter arginine-binding protein ArtJ.